The primary structure comprises 119 residues: uncharacterized protein (119 aa).

Positions 86–119 (KKQRMKMLTEQEEEEEEEEEEPPKPKKKVINRKK) are disordered. The span at 95–106 (EQEEEEEEEEEE) shows a compositional bias: acidic residues. The segment covering 110–119 (PKKKVINRKK) has biased composition (basic residues).

This is an uncharacterized protein from Sputnik virophage.